Reading from the N-terminus, the 802-residue chain is Bifunctional purine biosynthetic protein ADE5,7 (802 aa).

The GARS stretch occupies residues 1 to 444; the sequence is MPEITAFPQP…FRRDIAYRAL (444 aa). An ATP-grasp domain is found at 126-339; it reads KEFMARHNIP…LAEVLLACVE (214 aa). 157–218 provides a ligand contact to ATP; it reads KPFTSGRSVI…EEYLSGPEIS (62 aa). Positions 307 and 309 each coordinate Mg(2+). The interval 455 to 788 is AIRS; the sequence is LTYAAAGVSV…EAWVIGEVQE (334 aa).

It in the N-terminal section; belongs to the GARS family. The protein in the C-terminal section; belongs to the AIR synthase family. In terms of assembly, homodimer. Mg(2+) is required as a cofactor. Requires Mn(2+) as cofactor.

The protein localises to the cytoplasm. Its subcellular location is the cytosol. The catalysed reaction is 2-formamido-N(1)-(5-O-phospho-beta-D-ribosyl)acetamidine + ATP = 5-amino-1-(5-phospho-beta-D-ribosyl)imidazole + ADP + phosphate + H(+). The enzyme catalyses 5-phospho-beta-D-ribosylamine + glycine + ATP = N(1)-(5-phospho-beta-D-ribosyl)glycinamide + ADP + phosphate + H(+). It functions in the pathway purine metabolism; IMP biosynthesis via de novo pathway; 5-amino-1-(5-phospho-D-ribosyl)imidazole from N(2)-formyl-N(1)-(5-phospho-D-ribosyl)glycinamide: step 2/2. Its pathway is purine metabolism; IMP biosynthesis via de novo pathway; N(1)-(5-phospho-D-ribosyl)glycinamide from 5-phospho-alpha-D-ribose 1-diphosphate: step 2/2. Catalyzes the second and fifth step in the 'de novo' purine biosynthesis pathway; contains phosphoribosylamine--glycine ligase (GARS) and phosphoribosylformylglycinamidine cyclo-ligase (AIRS) activities. The chain is Bifunctional purine biosynthetic protein ADE5,7 from Cryptococcus neoformans var. grubii serotype A (strain H99 / ATCC 208821 / CBS 10515 / FGSC 9487) (Filobasidiella neoformans var. grubii).